The sequence spans 399 residues: Lysosomal acid lipase/cholesteryl ester hydrolase (399 aa).

Residues 1–27 (MKMRFLGLVVCLVLWTLHSEASGGKLT) form the signal peptide. Positions 28–76 (AVNPETNMNVSEIISYWGFPSEEYLVETEDGYILCLNRIPHGRKNHSDK) are cleaved as a propeptide — removed in mature form. N-linked (GlcNAc...) asparagine glycans are attached at residues Asn36, Asn72, Asn101, and Asn161. Residues 80-380 (PVVFLQHGLL…EWEHLDFIWG (301 aa)) enclose the AB hydrolase-1 domain. The active-site Charge relay system is the Ser174. N-linked (GlcNAc...) asparagine glycosylation is found at Asn273 and Asn321. His374 (charge relay system) is an active-site residue.

This sequence belongs to the AB hydrolase superfamily. Lipase family. As to quaternary structure, monomer. Glycosylation is not essential for catalytic activity.

It localises to the lysosome. It catalyses the reaction a sterol ester + H2O = a sterol + a fatty acid + H(+). The catalysed reaction is cholesteryl (9Z-octadecenoate) + H2O = cholesterol + (9Z)-octadecenoate + H(+). It carries out the reaction a triacylglycerol + H2O = a 1,2-diacylglycerol + a fatty acid + H(+). The enzyme catalyses 1,2-di-(9Z-octadecenoyl)-glycerol + (9Z)-octadecenoate + H(+) = 1,2,3-tri-(9Z-octadecenoyl)-glycerol + H2O. It catalyses the reaction a 1,2-diacylglycerol + H2O = a 1-acylglycerol + a fatty acid + H(+). The catalysed reaction is 1,2-di-(9Z-octadecenoyl)-glycerol + H2O = 1-(9Z-octadecenoyl)-glycerol + (9Z)-octadecenoate + H(+). It carries out the reaction a 1,3-diacylglycerol + H2O = a 1-acylglycerol + a fatty acid + H(+). The enzyme catalyses 1,3-di-(9Z-octadecenoyl)-glycerol + H2O = 1-(9Z-octadecenoyl)-glycerol + (9Z)-octadecenoate + H(+). In terms of biological role, catalyzes the deacylation of cholesteryl ester core lipids of endocytosed low density lipoproteins to generate free fatty acids and cholesterol. Hydrolyzes triglycerides (1,2,3-triacylglycerol) and diglycerides (such as 1,2-diacylglycerol and 1,3-diacylglycerol) with preference for the acyl moieties at the sn-1 or sn-3 positions. This is Lysosomal acid lipase/cholesteryl ester hydrolase (LIPA) from Macaca fascicularis (Crab-eating macaque).